We begin with the raw amino-acid sequence, 689 residues long: Collagen alpha-2(IX) chain (689 aa).

A signal peptide spans Met1–Ala23. The tract at residues Arg26 to Arg518 is disordered. Residues Gly27 to Ile163 form a triple-helical region 4 (COL4) region. Pro residues predominate over residues Glu31–Val43. Residues Pro44–Pro56 show a composition bias toward low complexity. Composition is skewed to pro residues over residues Leu106–Val127 and Pro144–Pro157. Pro160 is modified (4-hydroxyproline). The segment at Gln164–Pro180 is nonhelical region 4 (NC4). An O-linked (Xyl...) (glycosaminoglycan) serine glycan is attached at Ser169. The tract at residues Gly181–Asp519 is triple-helical region 3 (COL3). Lys183 bears the 5-hydroxylysine mark. O-linked (Gal...) hydroxylysine glycosylation occurs at Lys183. A compositionally biased stretch (gly residues) spans Gly343–Gly352. Composition is skewed to low complexity over residues Glu353 to Pro366 and Arg393 to Pro413. Residues Ala520–Leu549 form a nonhelical region 3 (NC3) region. Residues Gly550–Ala632 are triple-helical region 2 (COL2). The tract at residues Met554–Phe663 is disordered. Over residues Pro557–Tyr566 the composition is skewed to pro residues. Over residues Lys599–Arg611 the composition is skewed to basic and acidic residues. The nonhelical region 2 (NC2) stretch occupies residues Ile633 to Asn634. Residues Gly635 to Cys664 are triple-helical region 1 (COL1). Positions Glu665–Pro689 are nonhelical region 1 (NC1).

The protein belongs to the fibril-associated collagens with interrupted helices (FACIT) family. As to quaternary structure, heterotrimer of an alpha 1(IX), an alpha 2(IX) and an alpha 3(IX) chain. The chains are linked to each other by interchain disulfide bonds. Trimers are also cross-linked via hydroxylysines. Post-translationally, covalently linked to the telopeptides of type II collagen by lysine-derived cross-links. Prolines at the third position of the tripeptide repeating unit (G-X-Y) are hydroxylated in some or all of the chains.

It is found in the secreted. The protein resides in the extracellular space. Its subcellular location is the extracellular matrix. Its function is as follows. Structural component of hyaline cartilage and vitreous of the eye. This chain is Collagen alpha-2(IX) chain, found in Homo sapiens (Human).